The primary structure comprises 276 residues: Orotidine 5'-phosphate decarboxylase (276 aa).

Residues D40, 62-64 (KTH), 93-102 (DRKFIDIGNT), Y228, and R246 each bind substrate. K95 functions as the Proton donor in the catalytic mechanism.

The protein belongs to the OMP decarboxylase family.

It carries out the reaction orotidine 5'-phosphate + H(+) = UMP + CO2. The protein operates within pyrimidine metabolism; UMP biosynthesis via de novo pathway; UMP from orotate: step 2/2. In Penicillium nalgiovense, this protein is Orotidine 5'-phosphate decarboxylase (pyrG).